We begin with the raw amino-acid sequence, 498 residues long: Cytochrome P450 6B1 (498 aa).

Residue cysteine 443 participates in heme binding.

It belongs to the cytochrome P450 family. It depends on heme as a cofactor. As to expression, midgut microsome.

The protein resides in the endoplasmic reticulum membrane. Its subcellular location is the microsome membrane. It catalyses the reaction an organic molecule + reduced [NADPH--hemoprotein reductase] + O2 = an alcohol + oxidized [NADPH--hemoprotein reductase] + H2O + H(+). Its function is as follows. Enables the insect to feed on furanocoumarin-producing plants and evolved as an adaptation for detoxification of xanthotoxin and other furanocoumarins. The protein is Cytochrome P450 6B1 (CYP6B1) of Papilio polyxenes (Black swallowtail butterfly).